Consider the following 376-residue polypeptide: N-acetyldiaminopimelate deacetylase (376 aa).

Aspartate 69 is an active-site residue. Glutamate 128 serves as the catalytic Proton acceptor.

Belongs to the peptidase M20A family. N-acetyldiaminopimelate deacetylase subfamily.

It catalyses the reaction N-acetyl-(2S,6S)-2,6-diaminopimelate + H2O = (2S,6S)-2,6-diaminopimelate + acetate. It participates in amino-acid biosynthesis; L-lysine biosynthesis via DAP pathway; LL-2,6-diaminopimelate from (S)-tetrahydrodipicolinate (acetylase route): step 3/3. Catalyzes the conversion of N-acetyl-diaminopimelate to diaminopimelate and acetate. In Bacillus cereus (strain 03BB102), this protein is N-acetyldiaminopimelate deacetylase.